The sequence spans 443 residues: Thymidine phosphorylase (443 aa).

It belongs to the thymidine/pyrimidine-nucleoside phosphorylase family. In terms of assembly, homodimer.

The catalysed reaction is thymidine + phosphate = 2-deoxy-alpha-D-ribose 1-phosphate + thymine. It participates in pyrimidine metabolism; dTMP biosynthesis via salvage pathway; dTMP from thymine: step 1/2. Functionally, the enzymes which catalyze the reversible phosphorolysis of pyrimidine nucleosides are involved in the degradation of these compounds and in their utilization as carbon and energy sources, or in the rescue of pyrimidine bases for nucleotide synthesis. This is Thymidine phosphorylase from Shewanella sp. (strain ANA-3).